The primary structure comprises 170 residues: MTSSDQSPSHDVFVYGSFQEPAVVNLILECAPVMVSAQLHGYHLYRLKGRLHPCISPSDNGLINGKILTGLTDSQLESLDMIEGTEYVRKTVEVVLTDTLEKKQVETIVWANKDDPNMYGEWDFEEWKRLHMEKFIEAATKFMEWKKNPNGRSREEFEKFVQDDSSPASA.

15-20 is a binding site for substrate; it reads YGSFQE. Glu-83 serves as the catalytic Proton acceptor. A compositionally biased stretch (basic and acidic residues) spans 147-162; it reads KNPNGRSREEFEKFVQ. A disordered region spans residues 147-170; sequence KNPNGRSREEFEKFVQDDSSPASA.

It belongs to the gamma-glutamylcyclotransferase family. As to expression, ubiquitous.

Its function is as follows. Putative gamma-glutamylcyclotransferase. The polypeptide is Protein AIG2 A (Arabidopsis thaliana (Mouse-ear cress)).